Consider the following 114-residue polypeptide: U5-lycotoxin-Ls1a (114 aa).

Residues 1–20 form the signal peptide; sequence MKYQILFGVVFLTLLSYCYS. The propeptide occupies 21–45; sequence EIEDEFENFVDEEMVEADDPFSLAR. 3 disulfide bridges follow: Cys-51–Cys-66, Cys-65–Cys-93, and Cys-77–Cys-91.

This sequence belongs to the neurotoxin 19 (CSTX) family. 04 (U1-Lctx) subfamily. In terms of tissue distribution, expressed by the venom gland.

Its subcellular location is the secreted. The sequence is that of U5-lycotoxin-Ls1a from Lycosa singoriensis (Wolf spider).